Reading from the N-terminus, the 422-residue chain is Serine--tRNA ligase (422 aa).

Position 226–228 (226–228) interacts with L-serine; the sequence is TSE. ATP-binding positions include 257 to 259 and V273; that span reads RRE. E280 contacts L-serine. 344 to 347 is a binding site for ATP; that stretch reads ELTS. An L-serine-binding site is contributed by T379.

It belongs to the class-II aminoacyl-tRNA synthetase family. Type-1 seryl-tRNA synthetase subfamily. In terms of assembly, homodimer. The tRNA molecule binds across the dimer.

The protein localises to the cytoplasm. The enzyme catalyses tRNA(Ser) + L-serine + ATP = L-seryl-tRNA(Ser) + AMP + diphosphate + H(+). It catalyses the reaction tRNA(Sec) + L-serine + ATP = L-seryl-tRNA(Sec) + AMP + diphosphate + H(+). It functions in the pathway aminoacyl-tRNA biosynthesis; selenocysteinyl-tRNA(Sec) biosynthesis; L-seryl-tRNA(Sec) from L-serine and tRNA(Sec): step 1/1. In terms of biological role, catalyzes the attachment of serine to tRNA(Ser). Is also able to aminoacylate tRNA(Sec) with serine, to form the misacylated tRNA L-seryl-tRNA(Sec), which will be further converted into selenocysteinyl-tRNA(Sec). The polypeptide is Serine--tRNA ligase (Corynebacterium glutamicum (strain ATCC 13032 / DSM 20300 / JCM 1318 / BCRC 11384 / CCUG 27702 / LMG 3730 / NBRC 12168 / NCIMB 10025 / NRRL B-2784 / 534)).